We begin with the raw amino-acid sequence, 822 residues long: Dextranase (822 aa).

The signal sequence occupies residues 1 to 38; the sequence is MTVNLTLQHASEIIGQDNVDLTLAAGASAKVSNLTVAS. Disordered regions lie at residues 607-669 and 683-788; these read EPVT…VDEL and ETAH…ETTS. The span at 619-636 shows a compositional bias: low complexity; it reads NTVTSEASSETAKSENTT. The segment covering 693-705 has biased composition (polar residues); it reads SVSNTDQGTVASD. The segment covering 706 to 761 has biased composition (low complexity); that stretch reads SITTPASEAASTAASTVSSEVSESVTVSSEPSETENSSEASTSESATPTTTAISES. A compositionally biased stretch (polar residues) spans 771–788; the sequence is LTESESQASTSLVSETTS.

It belongs to the glycosyl hydrolase 66 family.

The catalysed reaction is Endohydrolysis of (1-&gt;6)-alpha-D-glucosidic linkages in dextran.. The protein is Dextranase (dex) of Streptococcus salivarius.